A 337-amino-acid chain; its full sequence is 4-hydroxy-3-methylbut-2-enyl diphosphate reductase (337 aa).

Cysteine 38 is a binding site for [4Fe-4S] cluster. The (2E)-4-hydroxy-3-methylbut-2-enyl diphosphate site is built by histidine 67 and histidine 100. The dimethylallyl diphosphate site is built by histidine 67 and histidine 100. Isopentenyl diphosphate contacts are provided by histidine 67 and histidine 100. Residue cysteine 122 participates in [4Fe-4S] cluster binding. Histidine 150 contributes to the (2E)-4-hydroxy-3-methylbut-2-enyl diphosphate binding site. Residue histidine 150 coordinates dimethylallyl diphosphate. Histidine 150 lines the isopentenyl diphosphate pocket. The active-site Proton donor is glutamate 152. Position 190 (threonine 190) interacts with (2E)-4-hydroxy-3-methylbut-2-enyl diphosphate. Cysteine 220 lines the [4Fe-4S] cluster pocket. Serine 248, serine 249, asparagine 250, and serine 293 together coordinate (2E)-4-hydroxy-3-methylbut-2-enyl diphosphate. 4 residues coordinate dimethylallyl diphosphate: serine 248, serine 249, asparagine 250, and serine 293. Residues serine 248, serine 249, asparagine 250, and serine 293 each contribute to the isopentenyl diphosphate site.

Belongs to the IspH family. The cofactor is [4Fe-4S] cluster.

The enzyme catalyses isopentenyl diphosphate + 2 oxidized [2Fe-2S]-[ferredoxin] + H2O = (2E)-4-hydroxy-3-methylbut-2-enyl diphosphate + 2 reduced [2Fe-2S]-[ferredoxin] + 2 H(+). It carries out the reaction dimethylallyl diphosphate + 2 oxidized [2Fe-2S]-[ferredoxin] + H2O = (2E)-4-hydroxy-3-methylbut-2-enyl diphosphate + 2 reduced [2Fe-2S]-[ferredoxin] + 2 H(+). The protein operates within isoprenoid biosynthesis; dimethylallyl diphosphate biosynthesis; dimethylallyl diphosphate from (2E)-4-hydroxy-3-methylbutenyl diphosphate: step 1/1. It functions in the pathway isoprenoid biosynthesis; isopentenyl diphosphate biosynthesis via DXP pathway; isopentenyl diphosphate from 1-deoxy-D-xylulose 5-phosphate: step 6/6. Its function is as follows. Catalyzes the conversion of 1-hydroxy-2-methyl-2-(E)-butenyl 4-diphosphate (HMBPP) into a mixture of isopentenyl diphosphate (IPP) and dimethylallyl diphosphate (DMAPP). Acts in the terminal step of the DOXP/MEP pathway for isoprenoid precursor biosynthesis. This Mycolicibacterium vanbaalenii (strain DSM 7251 / JCM 13017 / BCRC 16820 / KCTC 9966 / NRRL B-24157 / PYR-1) (Mycobacterium vanbaalenii) protein is 4-hydroxy-3-methylbut-2-enyl diphosphate reductase.